Reading from the N-terminus, the 930-residue chain is Zn(2)-C6 fungal-type transcription factor FTF1c (930 aa).

Positions 137-164 (CIPCRRKKIRCSGEKPACEHCLRSYIPC) form a DNA-binding region, zn(2)-C6 fungal-type.

It localises to the nucleus. Functionally, zn(2)-C6 fungal-type transcription factor that has a role in the establishment of the fungus within the plant and/or the progress of the disease. Regulates the expression of virulence factors such as SIX1 and SIX6. The chain is Zn(2)-C6 fungal-type transcription factor FTF1c from Fusarium oxysporum f. sp. lycopersici (strain 4287 / CBS 123668 / FGSC 9935 / NRRL 34936) (Fusarium vascular wilt of tomato).